The sequence spans 210 residues: Large ribosomal subunit protein bL25 (210 aa).

Residues 186–210 (ISSASTEKEAESNQESTSTTPSSES) form a disordered region. The span at 198–210 (NQESTSTTPSSES) shows a compositional bias: low complexity.

The protein belongs to the bacterial ribosomal protein bL25 family. CTC subfamily. As to quaternary structure, part of the 50S ribosomal subunit; part of the 5S rRNA/L5/L18/L25 subcomplex. Contacts the 5S rRNA. Binds to the 5S rRNA independently of L5 and L18.

Functionally, this is one of the proteins that binds to the 5S RNA in the ribosome where it forms part of the central protuberance. The protein is Large ribosomal subunit protein bL25 of Ehrlichia chaffeensis (strain ATCC CRL-10679 / Arkansas).